We begin with the raw amino-acid sequence, 394 residues long: Elongation factor Tu 2 (394 aa).

Residues 10–204 enclose the tr-type G domain; sequence KPHVNVGTIG…YLDTYIPEPE (195 aa). The tract at residues 19-26 is G1; that stretch reads GHVDHGKT. 19-26 contributes to the GTP binding site; that stretch reads GHVDHGKT. T26 contacts Mg(2+). Positions 60 to 64 are G2; the sequence is GITIN. The interval 81–84 is G3; sequence DCPG. Residues 81–85 and 136–139 each bind GTP; these read DCPGH and NKCD. The tract at residues 136-139 is G4; the sequence is NKCD. Residues 174 to 176 are G5; it reads SAL.

It belongs to the TRAFAC class translation factor GTPase superfamily. Classic translation factor GTPase family. EF-Tu/EF-1A subfamily. In terms of assembly, monomer.

It is found in the cytoplasm. The enzyme catalyses GTP + H2O = GDP + phosphate + H(+). Its function is as follows. GTP hydrolase that promotes the GTP-dependent binding of aminoacyl-tRNA to the A-site of ribosomes during protein biosynthesis. This Yersinia enterocolitica serotype O:8 / biotype 1B (strain NCTC 13174 / 8081) protein is Elongation factor Tu 2.